A 139-amino-acid polypeptide reads, in one-letter code: ATP synthase epsilon chain (139 aa).

It belongs to the ATPase epsilon chain family. F-type ATPases have 2 components, CF(1) - the catalytic core - and CF(0) - the membrane proton channel. CF(1) has five subunits: alpha(3), beta(3), gamma(1), delta(1), epsilon(1). CF(0) has three main subunits: a, b and c.

The protein resides in the cell inner membrane. Produces ATP from ADP in the presence of a proton gradient across the membrane. This chain is ATP synthase epsilon chain, found in Enterobacter sp. (strain 638).